Reading from the N-terminus, the 613-residue chain is Ribosome-associated molecular chaperone SSB1 (613 aa).

The nucleotide binding domain (NBD) stretch occupies residues 1 to 391 (MAEGVFPGAI…ILTGQSTSDE (391 aa)). ATP contacts are provided by residues 16–18 (TTY), Lys-73, 205–207 (GGT), 271–278 (ERAKRTLS), and Gly-342. The segment at 392 to 402 (TKDLLLLDVAP) is inter-domain linker. The segment at 403–613 (LSLGVGMAGD…RAVTKAMSTR (211 aa)) is substrate binding domain (SBD). The lid domain (SBDalpha) stretch occupies residues 516–612 (SEEIEQMVNQ…KRAVTKAMST (97 aa)). The Nuclear export signal signature appears at 574 to 582 (VEAALADAF).

Belongs to the heat shock protein 70 family. Ssb-type Hsp70 subfamily. As to quaternary structure, binds to ribosomes. Binds close to the ribosomal tunnel exit via contacts with both ribosomal proteins and rRNA. Directly interacts with nascent polypeptides. This interaction is dependent on the ribosome-associated complex (RAC). Interacts with SSE1. Interacts with FES1.

It localises to the cytoplasm. It carries out the reaction ATP + H2O = ADP + phosphate + H(+). Its function is as follows. Ribosome-bound, Hsp70-type chaperone that assists in the cotranslational folding of newly synthesized proteins in the cytosol. Stimulates folding by interacting with nascent chains, binding to short, largely hydrophobic sequences exposed by unfolded proteins, thereby stabilizing longer, more slowly translated, and aggregation-prone nascent polypeptides and domains that cannot fold stably until fully synthesized. The Hsp70-protein substrate interaction depends on ATP-binding and on allosteric regulation between the NBD and the SBD. The ATP-bound state is characterized by a fast exchange rate of substrate (low affinity state), while in the ADP-bound state exchange is much slower (high affinity state). During the Hsp70 cycle, the chaperone switches between the ATP-bound state (open conformation) and the ADP-bound state (closed conformation) by major conformational rearrangements involving mainly the lid domain. Ssb cooperates with a specific Hsp40/Hsp70 co-chaperone termed the ribosome-associated complex (RAC), which stimulates the ATPase activity of the ribosome-associated pool of Ssbs and switches it to the high affinity substrate binding state. Hsp110 chaperone SSE1 and FES1 act as nucleotide exchange factors that cause substrate release. The chain is Ribosome-associated molecular chaperone SSB1 (SSB1) from Kluyveromyces marxianus (Yeast).